The following is a 35-amino-acid chain: Surfactant protein C (35 aa).

2 S-palmitoyl cysteine lipidation sites follow: Cys-5 and Cys-6.

The protein resides in the secreted. It is found in the extracellular space. It localises to the surface film. Pulmonary surfactant associated proteins promote alveolar stability by lowering the surface tension at the air-liquid interface in the peripheral air spaces. The chain is Surfactant protein C (SFTPC) from Sus scrofa (Pig).